Consider the following 395-residue polypeptide: NAD(P)H-quinone oxidoreductase subunit H (395 aa).

This sequence belongs to the complex I 49 kDa subunit family. As to quaternary structure, NDH-1 can be composed of about 15 different subunits; different subcomplexes with different compositions have been identified which probably have different functions.

It is found in the cellular thylakoid membrane. The catalysed reaction is a plastoquinone + NADH + (n+1) H(+)(in) = a plastoquinol + NAD(+) + n H(+)(out). It carries out the reaction a plastoquinone + NADPH + (n+1) H(+)(in) = a plastoquinol + NADP(+) + n H(+)(out). Its function is as follows. NDH-1 shuttles electrons from an unknown electron donor, via FMN and iron-sulfur (Fe-S) centers, to quinones in the respiratory and/or the photosynthetic chain. The immediate electron acceptor for the enzyme in this species is believed to be plastoquinone. Couples the redox reaction to proton translocation, and thus conserves the redox energy in a proton gradient. Cyanobacterial NDH-1 also plays a role in inorganic carbon-concentration. The polypeptide is NAD(P)H-quinone oxidoreductase subunit H (Prochlorococcus marinus (strain MIT 9301)).